The sequence spans 358 residues: Trace amine-associated receptor 7a (358 aa).

Residues Met-1–Arg-47 lie on the Extracellular side of the membrane. The N-linked (GlcNAc...) asparagine glycan is linked to Asn-34. 2 disulfides stabilise this stretch: Cys-37/Cys-201 and Cys-120/Cys-205. The helical transmembrane segment at Leu-48–Val-68 threads the bilayer. Over Met-69–Asn-83 the chain is Cytoplasmic. Residues Phe-84–Ser-104 form a helical membrane-spanning segment. At Thr-105 to Lys-121 the chain is on the extracellular side. A helical membrane pass occupies residues Phe-122 to Val-143. The Cytoplasmic segment spans residues Asp-144–Lys-166. Residues Cys-167–Ala-187 traverse the membrane as a helical segment. At Asn-188–Ser-212 the chain is on the extracellular side. The N-linked (GlcNAc...) asparagine glycan is linked to Asn-210. A helical transmembrane segment spans residues Trp-213–Ser-233. Over Lys-234–Thr-274 the chain is Cytoplasmic. The chain crosses the membrane as a helical span at residues Leu-275–Ile-295. At Asp-296 to Glu-309 the chain is on the extracellular side. A helical membrane pass occupies residues Ile-310 to Phe-333. Over Arg-334–Glu-358 the chain is Cytoplasmic.

This sequence belongs to the G-protein coupled receptor 1 family.

The protein resides in the cell membrane. In terms of biological role, olfactory receptor specific for N,N-dimethylalkylamines trace amines. Trace amine compounds are enriched in animal body fluids and act on trace amine-associated receptors (TAARs) to elicit both intraspecific and interspecific innate behaviors. Ligand-binding causes a conformation change that triggers signaling via G(s)-class of G alpha proteins (GNAL or GNAS). The protein is Trace amine-associated receptor 7a of Rattus norvegicus (Rat).